The primary structure comprises 1146 residues: Probable phospholipid-transporting ATPase IIB (1146 aa).

Residues 1 to 143 (MADQIPLYPV…IKNQKYNVFT (143 aa)) are Cytoplasmic-facing. A helical transmembrane segment spans residues 144-164 (FIPGVLYEQFKFFLNLYFLVV). Topologically, residues 165 to 172 (SCSQFVPA) are extracellular. Residues 173–193 (LKIGYLYTYWAPLGFVLAVTI) traverse the membrane as a helical segment. The Cytoplasmic segment spans residues 194 to 381 (AREAIDEFRR…LDLELNQLTK (188 aa)). A helical transmembrane segment spans residues 382–402 (ALFLALVVLSVVMVTLQGFAG). The Extracellular segment spans residues 403–407 (PWYRN). Residues 408–427 (LFRFLLLFSYIIPISLRVNL) form a helical membrane-spanning segment. Residues 428-938 (DMGKAAYGWM…ALGQFVMHRG (511 aa)) are Cytoplasmic-facing. Asp-467 acts as the 4-aspartylphosphate intermediate in catalysis. 3 residues coordinate ATP: Asp-467, Lys-468, and Thr-469. Asp-467 serves as a coordination point for Mg(2+). A Mg(2+)-binding site is contributed by Thr-469. Residues 508–519 (VHSQPSGHNPSS) show a composition bias toward polar residues. The disordered stretch occupies residues 508–535 (VHSQPSGHNPSSAPLRRSQSSTPKVKKS). Residues Glu-590, Phe-632, Lys-637, Lys-656, Arg-685, Thr-686, Thr-765, Gly-766, Asp-767, Arg-847, and Lys-853 each coordinate ATP. A Mg(2+)-binding site is contributed by Asp-873. ATP is bound by residues Asn-876 and Asp-877. Asp-877 serves as a coordination point for Mg(2+). The helical transmembrane segment at 939-959 (LIISTMQAVFSSVFYFASVPL) threads the bilayer. The Extracellular portion of the chain corresponds to 960–961 (YQ). The chain crosses the membrane as a helical span at residues 962 to 982 (GFLMVGYATIYTMFPVFSLVL). Topologically, residues 983–1011 (DQDVKPEMAILYPELYKDLTKGRSLSFKT) are cytoplasmic. Residues 1012 to 1032 (FLIWVLISIYQGGILMYGALL) form a helical membrane-spanning segment. The Extracellular segment spans residues 1033–1040 (LFEDEFVH). A helical membrane pass occupies residues 1041 to 1061 (VVAISFTALILTELLMVALTI). Over 1062-1065 (RTWH) the chain is Cytoplasmic. A helical membrane pass occupies residues 1066-1086 (WLMVVAEFLSLGCYVASLAFL). The Extracellular segment spans residues 1087–1105 (NEYFGIGRVSFGAFLDVAF). Residues 1106 to 1128 (ITTVTFLWKVSAITVVSCLPLYV) traverse the membrane as a helical segment. Residues 1129 to 1146 (LKYLKRKLSPPSYSKLSS) lie on the Cytoplasmic side of the membrane.

It belongs to the cation transport ATPase (P-type) (TC 3.A.3) family. Type IV subfamily. Requires Mg(2+) as cofactor. As to expression, found in most tissues except spleen and muscle. Most abundant in testis. Also detected in fetal tissues.

The protein resides in the golgi apparatus. Its subcellular location is the trans-Golgi network membrane. It catalyses the reaction ATP + H2O + phospholipidSide 1 = ADP + phosphate + phospholipidSide 2.. The protein is Probable phospholipid-transporting ATPase IIB (Atp9b) of Mus musculus (Mouse).